A 338-amino-acid chain; its full sequence is Malate dehydrogenase, mitochondrial (338 aa).

A mitochondrion-targeting transit peptide spans M1–N24. NAD(+) contacts are provided by residues G31 to G37 and D57. S33 is a glycosylation site (O-linked (GlcNAc) serine). N6-acetyllysine; alternate is present on residues K78 and K91. N6-succinyllysine; alternate occurs at positions 78 and 91. Substrate is bound by residues R104 and R110. NAD(+) contacts are provided by residues N117 and I140–N142. N142 provides a ligand contact to substrate. K165 carries the post-translational modification N6-acetyllysine. Residue R176 participates in substrate binding. An N6-acetyllysine; alternate modification is found at K185. An N6-succinyllysine; alternate modification is found at K185. Catalysis depends on H200, which acts as the Proton acceptor. N6-succinyllysine is present on K203. 2 positions are modified to N6-acetyllysine; alternate: K215 and K239. Residues K215 and K239 each carry the N6-succinyllysine; alternate modification. K239 is modified (N6-malonyllysine; alternate). Position 246 is a phosphoserine (S246). M251 is a binding site for NAD(+). N6-succinyllysine is present on K269. K296, K301, K307, K314, and K324 each carry N6-acetyllysine; alternate. An N6-succinyllysine; alternate mark is found at K296, K301, K307, K314, and K324. K307 is modified (N6-malonyllysine; alternate). At S326 the chain carries Phosphoserine. N6-acetyllysine; alternate is present on residues K328, K329, and K335. K328 carries the N6-succinyllysine; alternate modification. At K329 the chain carries N6-malonyllysine; alternate. K335 is subject to N6-succinyllysine; alternate.

Belongs to the LDH/MDH superfamily. MDH type 1 family. Homodimer. Acetylation is enhanced after treatment either with trichostin A (TCA) or with nicotinamide (NAM) with the appearance of tri- and tetraacetylations. Glucose also increases acetylation.

The protein resides in the mitochondrion matrix. It catalyses the reaction (S)-malate + NAD(+) = oxaloacetate + NADH + H(+). Enzyme activity is enhanced by acetylation. This is Malate dehydrogenase, mitochondrial (MDH2) from Bos taurus (Bovine).